The chain runs to 468 residues: 6-phospho-beta-galactosidase (468 aa).

D-galactose 6-phosphate-binding residues include Gln19, His116, Asn159, Glu160, and Asn297. Residue Glu160 is the Proton donor of the active site. Catalysis depends on Glu375, which acts as the Nucleophile. D-galactose 6-phosphate contacts are provided by Ser428, Trp429, Lys435, and Tyr437.

This sequence belongs to the glycosyl hydrolase 1 family.

The enzyme catalyses a 6-phospho-beta-D-galactoside + H2O = D-galactose 6-phosphate + an alcohol. The protein operates within carbohydrate metabolism; lactose degradation; D-galactose 6-phosphate and beta-D-glucose from lactose 6-phosphate: step 1/1. This Streptococcus pyogenes serotype M12 (strain MGAS2096) protein is 6-phospho-beta-galactosidase.